A 485-amino-acid polypeptide reads, in one-letter code: Zinc finger protein 577 (485 aa).

The segment at 1–21 is disordered; the sequence is MKNATIVMSVRREQGSSSGEG. The 72-residue stretch at 23–94 folds into the KRAB domain; sequence LSFEDVAVGF…EGAAHSQICP (72 aa). Residues 158–180 form a C2H2-type 1; degenerate zinc finger; the sequence is HECSVCGRAFSRKAQLIQHQRTE. 7 C2H2-type zinc fingers span residues 186–208, 214–236, 242–264, 270–292, 298–320, 326–348, and 354–376; these read HGCG…QRTH, HECS…QRTH, YRCS…QRSH, YGCS…QRLH, YKCS…QRIH, YECS…QRTH, and YSCR…EKTH.

Belongs to the krueppel C2H2-type zinc-finger protein family.

The protein resides in the nucleus. May be involved in transcriptional regulation. This is Zinc finger protein 577 (ZNF577) from Homo sapiens (Human).